The chain runs to 198 residues: Probable GTP-binding protein EngB (198 aa).

An EngB-type G domain is found at 21-195 (NFSEVAFLGR…EDIIINQTLG (175 aa)). Residues 29–36 (GRSNVGKS), 56–60 (GKTQL), 81–84 (DLPG), 151–154 (TKCD), and 174–176 (VSN) each bind GTP. 2 residues coordinate Mg(2+): Ser-36 and Thr-58.

This sequence belongs to the TRAFAC class TrmE-Era-EngA-EngB-Septin-like GTPase superfamily. EngB GTPase family. It depends on Mg(2+) as a cofactor.

Functionally, necessary for normal cell division and for the maintenance of normal septation. The chain is Probable GTP-binding protein EngB from Campylobacter jejuni (strain RM1221).